The following is a 221-amino-acid chain: Vesicle-associated membrane protein 722 (221 aa).

The Cytoplasmic segment spans residues methionine 1–leucine 196. In terms of domain architecture, Longin spans phenylalanine 10 to leucine 114. The 61-residue stretch at lysine 130–glutamine 190 folds into the v-SNARE coiled-coil homology domain. A helical; Anchor for type IV membrane protein transmembrane segment spans residues isoleucine 197–phenylalanine 217. The Vesicular segment spans residues asparagine 218–lysine 221.

It belongs to the synaptobrevin family. Highly expressed in stems and roots. Detected in flowers and leaves.

It is found in the cell membrane. Its subcellular location is the early endosome membrane. Functionally, involved in the targeting and/or fusion of transport vesicles to their target membrane. The sequence is that of Vesicle-associated membrane protein 722 from Arabidopsis thaliana (Mouse-ear cress).